Reading from the N-terminus, the 258-residue chain is Synapse differentiation-inducing gene protein 1 (258 aa).

Residues 1–181 (MAGVVEQKSG…NFLVMPPRDH (181 aa)) lie on the Cytoplasmic side of the membrane. Serine 137 bears the Phosphoserine mark. Residues 182–202 (LGLSVFSMLCCFWPLGIAAFY) traverse the membrane as a helical segment. Topologically, residues 203–228 (LSHETNKAVAKGDFHQASTSSRRALF) are extracellular. An intramembrane region (helical) is located at residues 229–249 (LAVLSITIGTGIYVGVAVALI). Over 250–258 (AYLSKSNHL) the chain is Extracellular.

Belongs to the CD225/Dispanin family. As to quaternary structure, homodimer. Interacts with GRIA1 and GRIA2.

It localises to the cell membrane. It is found in the early endosome membrane. The protein resides in the postsynaptic density membrane. The protein localises to the synapse. Its subcellular location is the cell projection. It localises to the dendrite. It is found in the dendritic spine. Its function is as follows. May regulate AMPA receptor content at nascent synapses, and have a role in postsynaptic development and maturation. The sequence is that of Synapse differentiation-inducing gene protein 1 (SYNDIG1) from Bos taurus (Bovine).